The primary structure comprises 435 residues: 3-ketoacyl-CoA thiolase (435 aa).

The active-site Acyl-thioester intermediate is the Cys98. Catalysis depends on proton acceptor residues His391 and Cys421.

Belongs to the thiolase-like superfamily. Thiolase family. Heterotetramer of two alpha chains (FadJ) and two beta chains (FadI).

It localises to the cytoplasm. The catalysed reaction is an acyl-CoA + acetyl-CoA = a 3-oxoacyl-CoA + CoA. It functions in the pathway lipid metabolism; fatty acid beta-oxidation. In terms of biological role, catalyzes the final step of fatty acid oxidation in which acetyl-CoA is released and the CoA ester of a fatty acid two carbons shorter is formed. This Vibrio cholerae serotype O1 (strain ATCC 39541 / Classical Ogawa 395 / O395) protein is 3-ketoacyl-CoA thiolase.